A 341-amino-acid chain; its full sequence is Major histocompatibility complex class I-related protein 1 (341 aa).

An N-terminal signal peptide occupies residues M1–S22. Positions R23–S109 are alpha-1. Positions R23–T201 are antigen-binding cleft. Residues R23–M302 are Extracellular-facing. The 8-(9H-purin-6-yl)-2-oxa-8-azabicyclo[3.3.1]nona-3,6-diene-4,6-dicarbaldehyde site is built by Y29 and R31. R31, S46, and K65 together coordinate 5-(2-oxoethylideneamino)-6-(D-ribitylamino)uracil. Positions 31, 46, and 65 each coordinate 5-(2-oxopropylideneamino)-6-(D-ribitylamino)uracil. 3 residues coordinate 7-hydroxy-6-methyl-8-(1-D-ribityl)lumazine: R31, S46, and K65. 8-(9H-purin-6-yl)-2-oxa-8-azabicyclo[3.3.1]nona-3,6-diene-4,6-dicarbaldehyde-binding residues include K65 and H80. K65 serves as a coordination point for 2-amino-4-oxopteridine-6-carbaldehyde. K65 contacts pyridoxal. The N-linked (GlcNAc...) asparagine glycan is linked to N107. Residues G110 to T201 form an alpha-2 region. R116 contributes to the 8-(9H-purin-6-yl)-2-oxa-8-azabicyclo[3.3.1]nona-3,6-diene-4,6-dicarbaldehyde binding site. Residues R116, Y174, and Q175 each coordinate 5-(2-oxoethylideneamino)-6-(D-ribitylamino)uracil. R116, Y174, and Q175 together coordinate 5-(2-oxopropylideneamino)-6-(D-ribitylamino)uracil. The 7-hydroxy-6-methyl-8-(1-D-ribityl)lumazine site is built by R116, Y174, and Q175. 2 disulfide bridges follow: C120/C183 and C222/C278. An alpha-3 region spans residues E202–Q293. The Ig-like C1-type domain occupies P203–P299. Residues E294 to M302 are connecting peptide. The chain crosses the membrane as a helical span at residues K303–W323. Residues R324–R341 lie on the Cytoplasmic side of the membrane.

The protein belongs to the MHC class I family. In terms of assembly, heterotrimer that consists of MR1, B2M and metabolite antigen. Major classes of metabolite ligands presented by MR1 include riboflavin-related antigens, pyrimidines and ribityl lumazines, nucleobase adducts and folate derivatives. Forms reversible covalent Schiff base complexes with microbial pyrimidine-based metabolite, which serves as a molecular switch triggering complete folding, stable association with B2M and translocation of the ternary complex from endoplasmic reticulum to the plasma membrane. Alternatively, forms non-Schiff base complexes with ribityl lumazines. On antigen-presenting cells, the ternary complex interacts with TCR on MR1-restricted T cells. Interacts with TAPBP and TAPBPL chaperones in the endoplasmic reticulum. TAPBP associated or not with MHC class I peptide loading complex binds ligand-free MR1 or MR1-B2M complex, providing for stable MR1 pools ready for metabolite antigen processing. TAPBPL interacts with MR1 in a ligand-independent way; this interaction may stabilize MR1 pool and facilitate ligand loading and dissociation. Structurally, MR1-B2M heterodimer adopts a topology similar to classical MHC class I molecules, with alpha-1 and alpha-2 domains of MR1 forming the antigen-binding cleft composed of two alpha-helices resting on a floor of 7-stranded anti-parallel beta-pleated sheet. MR1-B2M heterodimer (via alpha-helices) interacts with TCR (via CDR domains). N-glycosylated.

It localises to the cell membrane. The protein resides in the endoplasmic reticulum membrane. The protein localises to the golgi apparatus membrane. Its subcellular location is the early endosome membrane. It is found in the late endosome membrane. In terms of biological role, antigen-presenting molecule specialized in displaying microbial pyrimidine-based metabolites to alpha-beta T cell receptors (TCR) on innate-type mucosal-associated invariant T (MAIT) cells. In complex with B2M preferentially presents riboflavin-derived metabolites to semi-invariant TCRs on MAIT cells, guiding immune surveillance of the microbial metabolome at mucosal epithelial barriers. Signature pyrimidine-based microbial antigens are generated via non-enzymatic condensation of metabolite intermediates of the riboflavin pathway with by-products arising from other metabolic pathways such as glycolysis. Typical potent antigenic metabolites are 5-(2-oxoethylideneamino)-6-D-ribitylaminouracil (5-OE-RU) and 5-(2-oxopropylideneamino)-6-D-ribitylaminouracil (5-OP-RU), products of condensation of 5-amino-6-D-ribityaminouracil (5-A-RU) with glyoxal or methylglyoxal by-products, respectively. May present microbial antigens to various MAIT cell subsets, providing for unique recognition of diverse microbes, including pathogens that do not synthesize riboflavin. Upon antigen recognition, elicits rapid innate-type MAIT cell activation to eliminate pathogenic microbes by directly killing infected cells. During T cell development, drives thymic selection and post-thymic terminal differentiation of MAIT cells in a process dependent on commensal microflora. Acts as an immune sensor of cancer cell metabolome. May present a tumor-specific or -associated metabolite essential for cancer cell survival to a pan-cancer TCR on a non-MAIT CD8-positive T cell clone, triggering T cell-mediated killing of a wide range of cancer cell types. May present tumor-enriched pyridoxal and pyridoxal 5'-phosphate antigens, enabling preferential recognition of cancer cells. Presents nucleobase carbonyl adducts generated during oxidative stress. Captures M3Ade, a nucleobase adduct composed of one adenine modified by a malondialdehyde trimer, for recognition by MR1-restricted T cell clones expressing a polyclonal TCR repertoire. This chain is Major histocompatibility complex class I-related protein 1, found in Pan troglodytes (Chimpanzee).